Here is a 277-residue protein sequence, read N- to C-terminus: General transcription factor IIF subunit 2 (277 aa).

It belongs to the TFIIF beta subunit family. In terms of assembly, heterodimer of an alpha and a beta subunit.

The protein resides in the nucleus. Its function is as follows. TFIIF is a general transcription initiation factor that binds to RNA polymerase II and helps to recruit it to the initiation complex in collaboration with TFIIB. The chain is General transcription factor IIF subunit 2 (TfIIFbeta) from Drosophila melanogaster (Fruit fly).